Reading from the N-terminus, the 301-residue chain is Homoserine O-acetyltransferase (301 aa).

Cys142 (acyl-thioester intermediate) is an active-site residue. Substrate-binding residues include Lys163 and Ser192. His235 acts as the Proton acceptor in catalysis. Glu237 is a catalytic residue. Arg249 is a substrate binding site.

This sequence belongs to the MetA family.

It localises to the cytoplasm. It carries out the reaction L-homoserine + acetyl-CoA = O-acetyl-L-homoserine + CoA. It functions in the pathway amino-acid biosynthesis; L-methionine biosynthesis via de novo pathway; O-acetyl-L-homoserine from L-homoserine: step 1/1. Its function is as follows. Transfers an acetyl group from acetyl-CoA to L-homoserine, forming acetyl-L-homoserine. This is Homoserine O-acetyltransferase from Bacillus anthracis (strain A0248).